Here is a 138-residue protein sequence, read N- to C-terminus: Centromere protein S (138 aa).

Met1 is modified (N-acetylmethionine). Residues 112-138 (AKKKKKLEDENRNSVESAEAGVEESEN) form a disordered region.

It belongs to the TAF9 family. CENP-S/MHF1 subfamily. In terms of assembly, heterodimer with CENPX, sometimes called MHF; this interaction stabilizes both partners. MHF heterodimers can assemble to form tetrameric structures. MHF also coassemble with CENPT-CENPW heterodimers at centromeres to form the tetrameric CENP-T-W-S-X complex. Forms a discrete complex with FANCM and CENPX, called FANCM-MHF; this interaction, probably mediated by direct binding between CENPS and FANCM, leads to synergistic activation of double-stranded DNA binding and strongly stimulates FANCM-mediated DNA remodeling. Recruited by FANCM to the Fanconi anemia (FA) core complex, which consists of CENPS, CENPX, FANCA, FANCB, FANCC, FANCE, FANCF, FANCG, FANCL, FANCM, FAAP24 and FAAP100. The FA core complex associates with Bloom syndrome (BLM) complex, which consists of at least BLM, DNA topoisomerase 3-alpha (TOP3A), RMI1/BLAP75, RPA1/RPA70 and RPA2/RPA32. The super complex between FA and BLM is called BRAFT. Component of the CENPA-CAD complex, composed of CENPI, CENPK, CENPL, CENPO, CENPP, CENPQ, CENPR and CENPS. The CENPA-CAD complex is probably recruited on centromeres by the CENPA-NAC complex, at least composed of CENPA, CENPC, CENPH, CENPM, CENPN, CENPT and CENPU.

It is found in the nucleus. It localises to the chromosome. Its subcellular location is the centromere. The protein resides in the kinetochore. Functionally, DNA-binding component of the Fanconi anemia (FA) core complex. Required for the normal activation of the FA pathway, leading to monoubiquitination of the FANCI-FANCD2 complex in response to DNA damage, cellular resistance to DNA cross-linking drugs, and prevention of chromosomal breakage. In complex with CENPX (MHF heterodimer), crucial cofactor for FANCM in both binding and ATP-dependent remodeling of DNA. Stabilizes FANCM. In complex with CENPX and FANCM (but not other FANC proteins), rapidly recruited to blocked forks and promotes gene conversion at blocked replication forks. In complex with CENPT, CENPW and CENPX (CENP-T-W-S-X heterotetramer), involved in the formation of a functional kinetochore outer plate, which is essential for kinetochore-microtubule attachment and faithful mitotic progression. As a component of MHF and CENP-T-W-S-X complexes, binds DNA and bends it to form a nucleosome-like structure. DNA-binding function is fulfilled in the presence of CENPX, with the following preference for DNA substates: Holliday junction &gt; double-stranded &gt; splay arm &gt; single-stranded. Does not bind DNA on its own. This is Centromere protein S (CENPS) from Bos taurus (Bovine).